The sequence spans 106 residues: UPF0060 membrane protein Bphy_5052 (106 aa).

A run of 4 helical transmembrane segments spans residues 4 to 24 (LLLY…PWRW), 30 to 50 (SVWL…LLTF), 58 to 78 (VYAA…WCVD), and 82 to 102 (PSAW…IIAF).

The protein belongs to the UPF0060 family.

Its subcellular location is the cell inner membrane. The chain is UPF0060 membrane protein Bphy_5052 from Paraburkholderia phymatum (strain DSM 17167 / CIP 108236 / LMG 21445 / STM815) (Burkholderia phymatum).